Here is a 96-residue protein sequence, read N- to C-terminus: UPF0235 protein NT01EI_0281 (96 aa).

It belongs to the UPF0235 family.

The polypeptide is UPF0235 protein NT01EI_0281 (Edwardsiella ictaluri (strain 93-146)).